A 393-amino-acid chain; its full sequence is Phosphoglycerate kinase (393 aa).

Residues 21–23 (DIN), Arg36, 59–62 (HFGR), Arg114, and Arg147 each bind substrate. Residues Lys197, Glu319, and 349 to 352 (GGDT) contribute to the ATP site.

Belongs to the phosphoglycerate kinase family. Monomer.

The protein localises to the cytoplasm. The enzyme catalyses (2R)-3-phosphoglycerate + ATP = (2R)-3-phospho-glyceroyl phosphate + ADP. The protein operates within carbohydrate degradation; glycolysis; pyruvate from D-glyceraldehyde 3-phosphate: step 2/5. In Dinoroseobacter shibae (strain DSM 16493 / NCIMB 14021 / DFL 12), this protein is Phosphoglycerate kinase.